Here is a 112-residue protein sequence, read N- to C-terminus: Cryptic phage CTXphi transcriptional repressor RstR (112 aa).

Residues 7-61 enclose the HTH cro/C1-type domain; sequence LANQRKAINKTQAQMADEIGISLTSYKKYESGEGLPTMENLVKIADALEISIDEL. The segment at residues 18–37 is a DNA-binding region (H-T-H motif); the sequence is QAQMADEIGISLTSYKKYES.

In terms of biological role, transcriptional repressor of the integrated CTXPhi phage gene rstA2. The polypeptide is Cryptic phage CTXphi transcriptional repressor RstR (rstR1) (Vibrio cholerae serotype O1 (strain ATCC 39315 / El Tor Inaba N16961)).